Reading from the N-terminus, the 400-residue chain is Large envelope protein (400 aa).

At Met-1 the chain carries N-acetylmethionine. Disordered stretches follow at residues Met-1 to Asn-20 and Val-88 to Ser-115. A lipid anchor (N-myristoyl glycine; by host) is attached at Gly-2. The interval Gly-2–Ala-119 is pre-S1. Residues Gly-2 to Asn-174 form a pre-S region. The Virion surface; in external conformation segment spans residues Gly-2–Gly-181. The Intravirion; in internal conformation portion of the chain corresponds to Gly-2–Arg-253. N-linked (GlcNAc...) asparagine glycosylation is present at Trp-4. The segment covering Val-88–Thr-106 has biased composition (polar residues). The interval Met-120–Asn-174 is pre-S2. The chain crosses the membrane as a helical span at residues Phe-182–Ile-202. Topologically, residues Pro-203–Arg-253 are intravirion; in external conformation. A helical transmembrane segment spans residues Phe-254 to Tyr-274. Residues Gln-275 to Ser-348 are Virion surface-facing. The N-linked (GlcNAc...) asparagine; by host glycan is linked to Asn-320. A helical transmembrane segment spans residues Leu-349 to Ile-369. Over Trp-370 to Trp-375 the chain is Intravirion. Residues Gly-376–Val-398 form a helical membrane-spanning segment. Residues Tyr-399–Ile-400 lie on the Virion surface side of the membrane.

This sequence belongs to the orthohepadnavirus major surface antigen family. In terms of assembly, in its internal form (Li-HBsAg), interacts with the capsid protein and with the isoform S. Interacts with host chaperone CANX. As to quaternary structure, associates with host chaperone CANX through its pre-S2 N glycan; this association may be essential for isoform M proper secretion. Interacts with isoform L. Interacts with the antigens of satellite virus HDV (HDVAgs); this interaction is required for encapsidation of HDV genomic RNA. Post-translationally, isoform M is N-terminally acetylated by host at a ratio of 90%, and N-glycosylated by host at the pre-S2 region. In terms of processing, myristoylated.

Its subcellular location is the virion membrane. The large envelope protein exists in two topological conformations, one which is termed 'external' or Le-HBsAg and the other 'internal' or Li-HBsAg. In its external conformation the protein attaches the virus to cell receptors and thereby initiating infection. This interaction determines the species specificity and liver tropism. This attachment induces virion internalization predominantly through caveolin-mediated endocytosis. The large envelope protein also assures fusion between virion membrane and endosomal membrane. In its internal conformation the protein plays a role in virion morphogenesis and mediates the contact with the nucleocapsid like a matrix protein. In terms of biological role, the middle envelope protein plays an important role in the budding of the virion. It is involved in the induction of budding in a nucleocapsid independent way. In this process the majority of envelope proteins bud to form subviral lipoprotein particles of 22 nm of diameter that do not contain a nucleocapsid. The protein is Large envelope protein of Homo sapiens (Human).